A 376-amino-acid polypeptide reads, in one-letter code: Succinyl-diaminopimelate desuccinylase (376 aa).

His-66 is a Zn(2+) binding site. Asp-68 is a catalytic residue. Residue Asp-99 participates in Zn(2+) binding. Glu-133 serves as the catalytic Proton acceptor. Positions 134, 162, and 348 each coordinate Zn(2+).

It belongs to the peptidase M20A family. DapE subfamily. Homodimer. Zn(2+) serves as cofactor. Co(2+) is required as a cofactor.

The enzyme catalyses N-succinyl-(2S,6S)-2,6-diaminopimelate + H2O = (2S,6S)-2,6-diaminopimelate + succinate. It functions in the pathway amino-acid biosynthesis; L-lysine biosynthesis via DAP pathway; LL-2,6-diaminopimelate from (S)-tetrahydrodipicolinate (succinylase route): step 3/3. Catalyzes the hydrolysis of N-succinyl-L,L-diaminopimelic acid (SDAP), forming succinate and LL-2,6-diaminopimelate (DAP), an intermediate involved in the bacterial biosynthesis of lysine and meso-diaminopimelic acid, an essential component of bacterial cell walls. The chain is Succinyl-diaminopimelate desuccinylase from Xanthomonas oryzae pv. oryzae (strain MAFF 311018).